The primary structure comprises 84 residues: Putative membrane protein insertion efficiency factor (84 aa).

This sequence belongs to the UPF0161 family.

It is found in the cell inner membrane. Could be involved in insertion of integral membrane proteins into the membrane. The sequence is that of Putative membrane protein insertion efficiency factor from Nostoc sp. (strain PCC 7120 / SAG 25.82 / UTEX 2576).